A 130-amino-acid chain; its full sequence is Small ribosomal subunit protein uS11 (130 aa).

The protein belongs to the universal ribosomal protein uS11 family. In terms of assembly, part of the 30S ribosomal subunit. Interacts with proteins S7 and S18. Binds to IF-3.

Functionally, located on the platform of the 30S subunit, it bridges several disparate RNA helices of the 16S rRNA. Forms part of the Shine-Dalgarno cleft in the 70S ribosome. The sequence is that of Small ribosomal subunit protein uS11 from Campylobacter curvus (strain 525.92).